The following is a 202-amino-acid chain: Snake venom metalloproteinase atroxlysin-1 (202 aa).

The Peptidase M12B domain occupies 6 to 202 (RYVDLFIVVD…ENPQCILNKR (197 aa)). Ca(2+) is bound by residues aspartate 9 and aspartate 93. Intrachain disulfides connect cysteine 117-cysteine 197, cysteine 157-cysteine 181, and cysteine 159-cysteine 164. Histidine 142 provides a ligand contact to Zn(2+). Residue glutamate 143 is part of the active site. Zn(2+) contacts are provided by histidine 146 and histidine 152. Cysteine 197 and asparagine 200 together coordinate Ca(2+).

This sequence belongs to the venom metalloproteinase (M12B) family. P-I subfamily. In terms of assembly, monomer. The cofactor is Zn(2+). Expressed by the venom gland.

The protein resides in the secreted. With respect to regulation, inhibited by EDTA, DTT and high concentrations of zinc ions (&gt;2 mM). Weakly inhibited by TLCK. Not inhibited by PMSF. Activated by calcium ions. Snake venom zinc metalloproteinase that acts on fibrinogen, fibrin, fibronectin (FN1), type I collagen, type IV collagen, integrin alpha-7/beta-1 (ITGA7/ITGB1) and integrin alpha-1/beta-1 (ITGA1/ITGB1). Binds to fibronectin (FN1), fibrinogen and, weakly, to type I collagen and laminin. Cleaves Xaa-Leu bonds. Inhibits ADP- and collagen-induced platelet aggregation both in the presence (IC(50)=1.4 uM for collagen) and in the absence (IC(50)=2.2 uM for collagen) of cofactors. Has hemorrhagic activity. The chain is Snake venom metalloproteinase atroxlysin-1 from Bothrops atrox (Barba amarilla).